The sequence spans 192 residues: Orotate phosphoribosyltransferase 2 (192 aa).

116 to 124 (EDIVTTGLS) lines the 5-phospho-alpha-D-ribose 1-diphosphate pocket. Residues Thr120 and Arg148 each coordinate orotate.

This sequence belongs to the purine/pyrimidine phosphoribosyltransferase family. PyrE subfamily. In terms of assembly, homodimer. Mg(2+) is required as a cofactor.

The enzyme catalyses orotidine 5'-phosphate + diphosphate = orotate + 5-phospho-alpha-D-ribose 1-diphosphate. It participates in pyrimidine metabolism; UMP biosynthesis via de novo pathway; UMP from orotate: step 1/2. Catalyzes the transfer of a ribosyl phosphate group from 5-phosphoribose 1-diphosphate to orotate, leading to the formation of orotidine monophosphate (OMP). The polypeptide is Orotate phosphoribosyltransferase 2 (Mesorhizobium japonicum (strain LMG 29417 / CECT 9101 / MAFF 303099) (Mesorhizobium loti (strain MAFF 303099))).